The chain runs to 374 residues: tRNA-specific 2-thiouridylase MnmA (374 aa).

ATP-binding positions include 12–19 and Met38; that span reads GMSGGVDS. The interaction with target base in tRNA stretch occupies residues 98 to 100; that stretch reads NPD. The active-site Nucleophile is Cys103. An intrachain disulfide couples Cys103 to Cys207. Residue Gly128 coordinates ATP. Positions 157–159 are interaction with tRNA; the sequence is KDQ. Cys207 (cysteine persulfide intermediate) is an active-site residue. Residues 321–322 form an interaction with tRNA region; that stretch reads RY.

It belongs to the MnmA/TRMU family.

Its subcellular location is the cytoplasm. It catalyses the reaction S-sulfanyl-L-cysteinyl-[protein] + uridine(34) in tRNA + AH2 + ATP = 2-thiouridine(34) in tRNA + L-cysteinyl-[protein] + A + AMP + diphosphate + H(+). Catalyzes the 2-thiolation of uridine at the wobble position (U34) of tRNA, leading to the formation of s(2)U34. This chain is tRNA-specific 2-thiouridylase MnmA, found in Aliivibrio fischeri (strain ATCC 700601 / ES114) (Vibrio fischeri).